The chain runs to 41 residues: Large ribosomal subunit protein bL36 (41 aa).

This sequence belongs to the bacterial ribosomal protein bL36 family.

The sequence is that of Large ribosomal subunit protein bL36 from Rhodopseudomonas palustris (strain BisB5).